The sequence spans 101 residues: Small ribosomal subunit protein uS14 (101 aa).

It belongs to the universal ribosomal protein uS14 family. As to quaternary structure, part of the 30S ribosomal subunit. Contacts proteins S3 and S10.

In terms of biological role, binds 16S rRNA, required for the assembly of 30S particles and may also be responsible for determining the conformation of the 16S rRNA at the A site. This chain is Small ribosomal subunit protein uS14, found in Acinetobacter baylyi (strain ATCC 33305 / BD413 / ADP1).